The chain runs to 142 residues: UPF0102 protein Bcep1808_0248 (142 aa).

The protein belongs to the UPF0102 family.

The protein is UPF0102 protein Bcep1808_0248 of Burkholderia vietnamiensis (strain G4 / LMG 22486) (Burkholderia cepacia (strain R1808)).